Here is a 273-residue protein sequence, read N- to C-terminus: MDRNILRACREDPRRTSTDIQLSVTSPNEPVPSRRTIRRRLQVAGLHGRRPVKKPLVSLKNRKARVEWAKQHLSWGPREWANHIWSDESKFNMFGTDGIQWIRRPIGSRYAPQYQCPTVKHGGGSVMVWGCFSDTSMGPLKRIVGTMDRYVYEDILENTMRPWARANLGRSWVFQQDNDPKHTSGHVANWFRRRRVNLLEWPSQSPDLNPIEHMWEELERRLKGVRASNANQKFAQLEAAWKSIPMTVVQTLLESMPRRCKAVIDAKGYPTKY.

This sequence belongs to the transposase 5 family.

The protein localises to the nucleus. Functionally, probably essential for transposable element Tcb1 transposition. The insertion of Tcb1 is the main cause of spontaneous mutations. This is Transposable element Tcb1 transposase from Caenorhabditis briggsae.